The sequence spans 195 residues: Transcriptional regulator LdrP (195 aa).

Positions 110–182 (GELRARIARY…YRRVYLLDLA (73 aa)) constitute an HTH crp-type domain. Positions 142 to 161 (HEEIADATASIRESVSKVLA) form a DNA-binding region, H-T-H motif.

Homodimer.

Functionally, activates transcription. Positively regulates PcrtB promoter upstream of the crtB operon in a cAMP-independent manner. Regulated genes include genes encoding DNA photolyase, phytoene synthase and cytochrome P450 monooxygenase, which are involved in carotenoid biosynthesis. Positively regulates the light-inducible gene cluster in the megaplasmid in a cAMP-independent manner. In Thermus thermophilus (strain ATCC 27634 / DSM 579 / HB8), this protein is Transcriptional regulator LdrP.